Here is a 97-residue protein sequence, read N- to C-terminus: Theromacin (97 aa).

The N-terminal stretch at 1-22 is a signal peptide; it reads MELKSGLSILLCFGICIAVINA. Disulfide bonds link Cys-24–Cys-31, Cys-46–Cys-50, Cys-53–Cys-95, Cys-61–Cys-69, and Cys-79–Cys-81.

Coelomic liquid (at protein level). Expressed in large fat cells in contact with coelomic cavities, in intestinal epithelia and at the epidermis level.

The protein resides in the secreted. In terms of biological role, has a bactericidal activity. Active against M.luteus. No activity toward E.coli and F.oxysporum. This Theromyzon tessulatum (Duck leech) protein is Theromacin.